The primary structure comprises 690 residues: uncharacterized protein (690 aa).

To M.genitalium MG366 and M.pneumoniae MPN544.

This is an uncharacterized protein from Ureaplasma parvum serovar 3 (strain ATCC 700970).